Here is a 132-residue protein sequence, read N- to C-terminus: uncharacterized protein (132 aa).

The interval 68–91 is disordered; sequence WSRTSPNSSRSSPRSPASMASTSS.

This is an uncharacterized protein from Streptomyces cacaoi.